The chain runs to 185 residues: Ribosome-recycling factor (185 aa).

This sequence belongs to the RRF family.

The protein resides in the cytoplasm. Functionally, responsible for the release of ribosomes from messenger RNA at the termination of protein biosynthesis. May increase the efficiency of translation by recycling ribosomes from one round of translation to another. This is Ribosome-recycling factor from Clostridium perfringens (strain ATCC 13124 / DSM 756 / JCM 1290 / NCIMB 6125 / NCTC 8237 / Type A).